The primary structure comprises 425 residues: Enolase (425 aa).

Residue Q162 participates in (2R)-2-phosphoglycerate binding. E204 serves as the catalytic Proton donor. Residues D241, E284, and D311 each contribute to the Mg(2+) site. Residues K336, R365, S366, and K387 each coordinate (2R)-2-phosphoglycerate. The active-site Proton acceptor is the K336.

It belongs to the enolase family. Mg(2+) is required as a cofactor.

Its subcellular location is the cytoplasm. The protein localises to the secreted. It localises to the cell surface. The catalysed reaction is (2R)-2-phosphoglycerate = phosphoenolpyruvate + H2O. It functions in the pathway carbohydrate degradation; glycolysis; pyruvate from D-glyceraldehyde 3-phosphate: step 4/5. Functionally, catalyzes the reversible conversion of 2-phosphoglycerate (2-PG) into phosphoenolpyruvate (PEP). It is essential for the degradation of carbohydrates via glycolysis. This Brucella abortus (strain S19) protein is Enolase.